The chain runs to 932 residues: MLSRLFLAQGRFCSSHPWEVIVCTLTLTICMLSMNYFTGLPRICGWNYECAPQVKESSLSSDVLVMCIMRTLAVAYLYLQFTKLRTTGSKYILGIAGLFTIFSSFLFSSAVIHLFGLELTGLNEALPFFLLLIDLTKASALTKFALSSTTQNEVVDNIARGMAILGPTITLDTVVTTLVISIGTMSSIRKMEVFCCFGILSLIANYFVFMTFFPACLSLVLELSNSNKYGRPVWHLGRFAEVLEEEEDRKPNPVVQRVKMIMRTGLVLVHAHSYWLASNDTELMSRDMLYDGNLLTDKKIDPTMPLWEFYATRLWPPTLDYILTAILATVLASHYIFFSDLATYPEKRVSIMEGHEVVNPGSDHEDASEVETIGTLSSSPSTSDVRVIESMTSRTQACQTDPVTASPRNSRSSSPVSSHSVKPARFTIGSSGSGSEDEEEEVIKEEEVEWVLETELKAPRPMPELLEILNVGKGPNALTDDEVQLLVGAKHIPAYKLENILDNPERGVAVRRQIISKLLPITDALEKLPYASYDYSFVSGACCENVIGYMPVPVGVAGPLLLDGQEFQVPMATTEGCLVASTNRGCRALRSAGGIHSVLIGDGMTRGPLVRLPSAQEAGAIKQWLEVPENFAAIKERFESTSRFAKLKSIQTALAGRYMFLRFKALTGDAMGMNMISKGTEQALHALQTMFPNIEIMSLSGNYCTDKKVAAINWIEGRGKSVVCEATVPAHIVQQVLKTSASALVDLNIHKNLVGSAMAGSIGGFNAHAANIVTAIYIATGQDAAQNIASSNCMTLMETRGPKGGDLYLSCTMPSIELGTVGGGTVLPPQSACLQMMDVKGSNIHGSGLNASQLARIVCATVMAGELSLMSALAAGHLVKSHMKHNRSALNIASPLPSIDEVATHRRSKSVDFSALKESSAAAPGTCTANAS.

The next 6 membrane-spanning stretches (helical) occupy residues 20-40 (VIVCTLTLTICMLSMNYFTGL), 59-79 (LSSDVLVMCIMRTLAVAYLYL), 92-112 (ILGIAGLFTIFSSFLFSSAVI), 113-133 (HLFGLELTGLNEALPFFLLLI), 162-182 (MAILGPTITLDTVVTTLVISI), and 193-213 (VFCCFGILSLIANYFVFMTFF). Asparagine 279 carries N-linked (GlcNAc...) asparagine glycosylation. The chain crosses the membrane as a helical span at residues 322–342 (ILTAILATVLASHYIFFSDLA). Residues 343 to 467 (TYPEKRVSIM…APRPMPELLE (125 aa)) form a linker region. The span at 357 to 367 (VVNPGSDHEDA) shows a compositional bias: basic and acidic residues. Positions 357-442 (VVNPGSDHED…SGSEDEEEEV (86 aa)) are disordered. The span at 374-403 (GTLSSSPSTSDVRVIESMTSRTQACQTDPV) shows a compositional bias: polar residues. Residues 406–421 (SPRNSRSSSPVSSHSV) are compositionally biased toward low complexity. The tract at residues 468–932 (ILNVGKGPNA…APGTCTANAS (465 aa)) is catalytic. Residues glutamate 575, lysine 707, and aspartate 783 each act as charge relay system in the active site. The N-linked (GlcNAc...) asparagine glycan is linked to asparagine 850. Histidine 882 serves as the catalytic Proton donor. Asparagine 886 is a glycosylation site (N-linked (GlcNAc...) asparagine). Serine 888 is subject to Phosphoserine; by AMPK.

Belongs to the HMG-CoA reductase family.

The protein localises to the endoplasmic reticulum membrane. It carries out the reaction (R)-mevalonate + 2 NADP(+) + CoA = (3S)-3-hydroxy-3-methylglutaryl-CoA + 2 NADPH + 2 H(+). Its pathway is metabolic intermediate biosynthesis; (R)-mevalonate biosynthesis; (R)-mevalonate from acetyl-CoA: step 3/3. In terms of biological role, this transmembrane glycoprotein is involved in the control of cholesterol biosynthesis. It is the rate-limiting enzyme of sterol biosynthesis. This Strongylocentrotus purpuratus (Purple sea urchin) protein is 3-hydroxy-3-methylglutaryl-coenzyme A reductase (HMGCR).